The primary structure comprises 275 residues: MASLQTQMISFYLIFLSILLTTIFFFKVNSTETTSFSITKFSPDQQNLIFQGDGYTTKGKLTLTKAVKSTVGRALYSTPIHIWDRDTGNVANFVTSFTFVIDAPSSYNVADGFTFFIAPVDTKPQTGGGYLGVFNSKEYDKTSQTVAVEFDTFYNAAWDPSNKERHIGIDVNSIKSVSTKSWNLQNGERANVVIAFNAATNVLTVTLTYPNSLEEENVTSYTLNEVVPLKDVVPEWVRIGFSATTGAEFAAHEVHSWSFHSELGGTSSSKQAADA.

Positions 1 to 30 are cleaved as a signal peptide; sequence MASLQTQMISFYLIFLSILLTTIFFFKVNS. The D-glucose site is built by D111 and G129. Residues E149 and D151 each coordinate Mn(2+). Ca(2+) is bound by residues D151, F153, N155, and D159. The Mn(2+) site is built by D159 and H166. A propeptide spanning residues 211–217 is cleaved from the precursor; it reads NSLEEEN. Positions 246 and 247 each coordinate D-glucose. Residues 270–275 constitute a propeptide that is removed on maturation; sequence KQAADA.

This sequence belongs to the leguminous lectin family. In terms of assembly, heterotetramer of two alpha and two beta chains. Post-translationally, the mature form consists of two chains, alpha and beta, produced by cleavage of the immature protein. These remain cleaved, yet fold together to form one subunit.

Functionally, D-mannose specific lectin. The chain is Lectin from Lens culinaris subsp. orientalis (Oriental wild lentil).